Consider the following 64-residue polypeptide: Putative antitoxin VapB1 (64 aa).

Possibly the antitoxin component of a type II toxin-antitoxin (TA) system. Its cognate toxin is VapC1 (Potential). The chain is Putative antitoxin VapB1 (vapB1) from Methanocaldococcus jannaschii (strain ATCC 43067 / DSM 2661 / JAL-1 / JCM 10045 / NBRC 100440) (Methanococcus jannaschii).